Reading from the N-terminus, the 435-residue chain is Putative dimethyl sulfoxide reductase membrane subunit C (435 aa).

A run of 11 helical transmembrane segments spans residues 22–42, 57–77, 95–115, 135–155, 186–206, 220–240, 257–277, 281–301, 304–324, 333–353, and 392–412; these read GWLG…AYQL, WGLY…GLIL, LGVL…LPDI, VWDF…LWLL, FWTA…TGWI, LVAP…LLVV, LTSL…YLLA, LPHA…FLIG, VYFW…LATP, IFTA…RLVF, and VEIA…MAGL.

Belongs to the NrfD family. As to quaternary structure, probable multiprotein complex that likely consists of DmsA, DmsB and DmsC.

The protein localises to the cell membrane. In terms of biological role, dimethyl sulfoxide (DMSO) reductase catalyzes the reduction of dimethyl sulfoxide (DMSO) to dimethyl sulfide (DMS) during anaerobic respiration; it can also use trimethylamine N-oxide (TMAO) as terminal electron acceptor. Subunit C is proposed to be a membrane anchoring subunit. The protein is Putative dimethyl sulfoxide reductase membrane subunit C (dmsC) of Halobacterium salinarum (strain ATCC 700922 / JCM 11081 / NRC-1) (Halobacterium halobium).